Consider the following 432-residue polypeptide: Glial fibrillary acidic protein (432 aa).

A head region spans residues 1–72 (MERRRITSAA…KETRASERAE (72 aa)). The residue at position 7 (threonine 7) is a Phosphothreonine; by AURKB and ROCK1. Arginine 12 carries the post-translational modification Omega-N-methylarginine. Serine 13 is modified (phosphoserine; by AURKB and ROCK1). Arginine 30 and arginine 36 each carry citrulline. Serine 38 is modified (phosphoserine; by AURKB and ROCK1). The region spanning 69–377 (ERAEMMELND…KLLEGEENRI (309 aa)) is the IF rod domain. Residues 73-104 (MMELNDRFASYIEKVRFLEQQNKALAAELNQL) are coil 1A. Serine 82 is subject to Phosphoserine. The tract at residues 105 to 115 (RAKEPTKLADV) is linker 1. Threonine 110 and threonine 150 each carry phosphothreonine. Positions 116–214 (YQAELRELRL…EEEVRELQEQ (99 aa)) are coil 1B. Positions 215-230 (LARQQVHVELDMAKPD) are linker 12. The coil 2A stretch occupies residues 231–252 (LTAALKEIRTQYEAMASSNMHE). The segment at 253–256 (AEEW) is linker 2. A coil 2B region spans residues 257–377 (YRSKFADLTD…KLLEGEENRI (121 aa)). Citrulline is present on arginine 270. Serine 323 carries the phosphoserine modification. The tract at residues 378–432 (TIPVQTFSNLQIRETSLDTKSVSEGHLKRNIVVKTVEMRDGEVIKESKQEHKDVM) is tail. Threonine 383 carries the phosphothreonine modification. Serine 385 is modified (phosphoserine). 2 positions are modified to citrulline: arginine 406 and arginine 416.

Belongs to the intermediate filament family. Interacts with SYNM. Post-translationally, phosphorylated by PKN1.

Its subcellular location is the cytoplasm. In terms of biological role, GFAP, a class-III intermediate filament, is a cell-specific marker that, during the development of the central nervous system, distinguishes astrocytes from other glial cells. This is Glial fibrillary acidic protein (GFAP) from Pongo abelii (Sumatran orangutan).